Reading from the N-terminus, the 384-residue chain is L-type lectin-like domain-containing protein C4F6.05c (384 aa).

The N-terminal stretch at 1-19 is a signal peptide; that stretch reads MKFCSLFHVLSFCCTLAYA. Residues 20–224 form the L-type lectin-like domain; that stretch reads VPKSQFLQLH…DLVALSNLNI (205 aa). Residues 20-353 lie on the Extracellular side of the membrane; it reads VPKSQFLQLH…AMGNAYSPYN (334 aa). A disordered region spans residues 227–251; the sequence is PDTSNNENLNPTSNTKQSVGDNTSP. The helical transmembrane segment at 354–374 threads the bilayer; that stretch reads LTNFMVFLLLGAIVSYGIMLV. The Cytoplasmic portion of the chain corresponds to 375 to 384; sequence RRDRRRHKYL.

The protein resides in the membrane. The protein localises to the endoplasmic reticulum. It is found in the golgi apparatus. This is L-type lectin-like domain-containing protein C4F6.05c from Schizosaccharomyces pombe (strain 972 / ATCC 24843) (Fission yeast).